The sequence spans 96 residues: Co-chaperonin GroES 2 (96 aa).

This sequence belongs to the GroES chaperonin family. Heptamer of 7 subunits arranged in a ring. Interacts with the chaperonin GroEL.

Its subcellular location is the cytoplasm. Together with the chaperonin GroEL, plays an essential role in assisting protein folding. The GroEL-GroES system forms a nano-cage that allows encapsulation of the non-native substrate proteins and provides a physical environment optimized to promote and accelerate protein folding. GroES binds to the apical surface of the GroEL ring, thereby capping the opening of the GroEL channel. The sequence is that of Co-chaperonin GroES 2 from Vibrio parahaemolyticus serotype O3:K6 (strain RIMD 2210633).